The primary structure comprises 120 residues: NAD(P)H-quinone oxidoreductase subunit 3 (120 aa).

Helical transmembrane passes span 6–26, 64–84, and 89–109; these read GYDAFLGFLLISAAVPVLALV, MFALVFVIFDVETVFLYPWAV, and LGLLAFIEALIFIAILIVALA.

It belongs to the complex I subunit 3 family. As to quaternary structure, NDH-1 can be composed of about 15 different subunits; different subcomplexes with different compositions have been identified which probably have different functions.

Its subcellular location is the cellular thylakoid membrane. The catalysed reaction is a plastoquinone + NADH + (n+1) H(+)(in) = a plastoquinol + NAD(+) + n H(+)(out). It catalyses the reaction a plastoquinone + NADPH + (n+1) H(+)(in) = a plastoquinol + NADP(+) + n H(+)(out). In terms of biological role, NDH-1 shuttles electrons from an unknown electron donor, via FMN and iron-sulfur (Fe-S) centers, to quinones in the respiratory and/or the photosynthetic chain. The immediate electron acceptor for the enzyme in this species is believed to be plastoquinone. Couples the redox reaction to proton translocation, and thus conserves the redox energy in a proton gradient. Cyanobacterial NDH-1 also plays a role in inorganic carbon-concentration. The protein is NAD(P)H-quinone oxidoreductase subunit 3 of Prochlorococcus marinus (strain MIT 9211).